The chain runs to 556 residues: MKSDIQIAQEAKMEPIKNVAEKLGLCEDDIEYYGKYKCKISLDVYDKVKNNNNGKLVLVTAINPTPAGEGKSTVTVGLGQALNRIGKKAVIALREPSLGPVFGIKGGAAGGGYAQVVPMEDINLHFTGDMHAITSANNLLSAAIDNHIHQGNVLRIDSRRIVFKRVMDMNDRALRHIIVGMGGKVNGFVREDGFNITVASEIMAILCLASDLEDLKERMGNIVIAYNLDGNPVYAKELEIQGAMALLMKDAIKPNLVQTLENTPALIHGGPFANIAHGCNSIMATKLALKLGDVVITEAGFGADLGAEKFFDIKCRYGNLEPECVVVVATIRALKHHGGVAKTELNIPNVEALKDGIANLEKQIENIKKFKITPVVAINKFVTDSSEEVEFIKDFCDRIGVKVALCDVWAKGGEGGIDLANIVLDALENSESNFEPIYDKEKSIREKIFTIASEIYGADKVNYTPAAKKQIDELEKFKLDKLPICMAKTQYSLSDNPSLLARPTGFDITVKEVRVSNGAGFIVVQTGDIMTMPGLPKVPAANKMDVLKSGEIIGLF.

An ATP-binding site is contributed by Thr65–Ser72.

Belongs to the formate--tetrahydrofolate ligase family.

The enzyme catalyses (6S)-5,6,7,8-tetrahydrofolate + formate + ATP = (6R)-10-formyltetrahydrofolate + ADP + phosphate. The protein operates within one-carbon metabolism; tetrahydrofolate interconversion. The polypeptide is Formate--tetrahydrofolate ligase (Clostridium beijerinckii (strain ATCC 51743 / NCIMB 8052) (Clostridium acetobutylicum)).